The primary structure comprises 131 residues: UPF0344 protein Sca_0577 (131 aa).

4 helical membrane passes run methionine 1–isoleucine 21, leucine 42–alanine 62, leucine 69–valine 89, and glycine 99–proline 119.

Belongs to the UPF0344 family.

The protein localises to the cell membrane. The polypeptide is UPF0344 protein Sca_0577 (Staphylococcus carnosus (strain TM300)).